Consider the following 84-residue polypeptide: Beta/gamma-crystallin (84 aa).

2 consecutive Beta/gamma crystallin 'Greek key' domains span residues 2–42 (GKII…IVES) and 43–84 (GTWF…VKQQ). Residues 64 to 84 (KYPNPGSWGGNDDELSSVKQQ) form a disordered region.

The protein belongs to the beta/gamma-crystallin family. In terms of assembly, monomer. As to expression, palps of larvae and otolith of the light-sensing ocellus.

Its function is as follows. Structural component of the neuroectodermal visual system. This chain is Beta/gamma-crystallin, found in Ciona intestinalis (Transparent sea squirt).